We begin with the raw amino-acid sequence, 20 residues long: Maximin-Hu (20 aa).

It belongs to the bombinin family. Expressed by the skin glands.

The protein localises to the secreted. Its function is as follows. Has antimicrobial activity. This Bombina maxima (Giant fire-bellied toad) protein is Maximin-Hu.